A 572-amino-acid polypeptide reads, in one-letter code: Proline--tRNA ligase (572 aa).

The protein belongs to the class-II aminoacyl-tRNA synthetase family. ProS type 1 subfamily. In terms of assembly, homodimer.

The protein localises to the cytoplasm. The catalysed reaction is tRNA(Pro) + L-proline + ATP = L-prolyl-tRNA(Pro) + AMP + diphosphate. Its function is as follows. Catalyzes the attachment of proline to tRNA(Pro) in a two-step reaction: proline is first activated by ATP to form Pro-AMP and then transferred to the acceptor end of tRNA(Pro). As ProRS can inadvertently accommodate and process non-cognate amino acids such as alanine and cysteine, to avoid such errors it has two additional distinct editing activities against alanine. One activity is designated as 'pretransfer' editing and involves the tRNA(Pro)-independent hydrolysis of activated Ala-AMP. The other activity is designated 'posttransfer' editing and involves deacylation of mischarged Ala-tRNA(Pro). The misacylated Cys-tRNA(Pro) is not edited by ProRS. This chain is Proline--tRNA ligase, found in Haemophilus influenzae (strain PittGG).